Consider the following 621-residue polypeptide: Chaperone protein HtpG (621 aa).

Residues 1-328 (MKQEKKKFDA…SEDLPLNISR (328 aa)) are a; substrate-binding. Positions 329–544 (ESLQHNNVLE…EAAMDIRMER (216 aa)) are b. Positions 478–498 (DVDQATSSSEEKNKDDKKSDD) are disordered. The segment covering 486–498 (SEEKNKDDKKSDD) has biased composition (basic and acidic residues). Residues 545-621 (FLIEQKQIAN…LNDIVQKAIL (77 aa)) are c.

The protein belongs to the heat shock protein 90 family. In terms of assembly, homodimer.

It localises to the cytoplasm. Its function is as follows. Molecular chaperone. Has ATPase activity. This chain is Chaperone protein HtpG, found in Rickettsia bellii (strain RML369-C).